A 116-amino-acid polypeptide reads, in one-letter code: Large ribosomal subunit protein bL19 (116 aa).

This sequence belongs to the bacterial ribosomal protein bL19 family.

Its function is as follows. This protein is located at the 30S-50S ribosomal subunit interface and may play a role in the structure and function of the aminoacyl-tRNA binding site. This Staphylococcus aureus (strain Mu3 / ATCC 700698) protein is Large ribosomal subunit protein bL19.